The following is a 487-amino-acid chain: NADH-quinone oxidoreductase subunit N (487 aa).

14 helical membrane-spanning segments follow: residues 8–28, 37–57, 71–91, 104–124, 125–145, 159–179, 203–223, 235–255, 269–289, 303–323, 327–347, 374–394, 408–427, and 449–469; these read LLAL…MLAI, AFVV…IVMA, GYAV…CTFG, EFYL…GSRH, LASL…LVGY, YMVL…LLYA, LMGG…LAPF, PAPV…CVLL, IHWL…LLAL, ISHF…QMPV, GVYL…ISMM, AVLT…GFIG, WWLS…YYLR, and AITS…ALGL.

The protein belongs to the complex I subunit 2 family. NDH-1 is composed of 14 different subunits. Subunits NuoA, H, J, K, L, M, N constitute the membrane sector of the complex.

It is found in the cell inner membrane. It catalyses the reaction a quinone + NADH + 5 H(+)(in) = a quinol + NAD(+) + 4 H(+)(out). Its function is as follows. NDH-1 shuttles electrons from NADH, via FMN and iron-sulfur (Fe-S) centers, to quinones in the respiratory chain. The immediate electron acceptor for the enzyme in this species is believed to be ubiquinone. Couples the redox reaction to proton translocation (for every two electrons transferred, four hydrogen ions are translocated across the cytoplasmic membrane), and thus conserves the redox energy in a proton gradient. This chain is NADH-quinone oxidoreductase subunit N, found in Aeromonas hydrophila subsp. hydrophila (strain ATCC 7966 / DSM 30187 / BCRC 13018 / CCUG 14551 / JCM 1027 / KCTC 2358 / NCIMB 9240 / NCTC 8049).